Consider the following 440-residue polypeptide: Argininosuccinate lyase (440 aa).

The protein belongs to the lyase 1 family. Argininosuccinate lyase subfamily.

The protein localises to the cytoplasm. The enzyme catalyses 2-(N(omega)-L-arginino)succinate = fumarate + L-arginine. It participates in amino-acid biosynthesis; L-arginine biosynthesis; L-arginine from L-ornithine and carbamoyl phosphate: step 3/3. In Clostridium botulinum (strain 657 / Type Ba4), this protein is Argininosuccinate lyase.